The following is a 235-amino-acid chain: Small ribosomal subunit protein eS6 (235 aa).

Residues serine 229 and serine 230 each carry the phosphoserine modification.

Belongs to the eukaryotic ribosomal protein eS6 family. Phosphorylated.

The chain is Small ribosomal subunit protein eS6 (RPS6) from Kluyveromyces marxianus (Yeast).